We begin with the raw amino-acid sequence, 369 residues long: DNA polymerase processivity factor (369 aa).

The disordered stretch occupies residues 345–369; the sequence is IGSRKRGPSSPPFEREGKLAKVINQ.

The protein belongs to the herpesviridae DNA polymerase processivity factor family. In terms of assembly, interacts with the DNA polymerase catalytic subunit. Interacts with the origin-binding protein.

The protein localises to the host nucleus. Plays an essential role in viral DNA replication by acting as the polymerase accessory subunit. Associates with the viral polymerase to increase its processivity and forms high-affinity direct interactions with DNA. Facilitates the origin-binding protein UL9 loading onto DNA thus increasing its ability to assemble into a functional complex capable of unwinding duplex DNA. The protein is DNA polymerase processivity factor (MDV055) of Gallus gallus (Chicken).